We begin with the raw amino-acid sequence, 155 residues long: Small ribosomal subunit protein uS7 (155 aa).

It belongs to the universal ribosomal protein uS7 family. Part of the 30S ribosomal subunit. Contacts proteins S9 and S11.

One of the primary rRNA binding proteins, it binds directly to 16S rRNA where it nucleates assembly of the head domain of the 30S subunit. Is located at the subunit interface close to the decoding center, probably blocks exit of the E-site tRNA. The polypeptide is Small ribosomal subunit protein uS7 (Fervidobacterium nodosum (strain ATCC 35602 / DSM 5306 / Rt17-B1)).